We begin with the raw amino-acid sequence, 279 residues long: Shikimate dehydrogenase (NADP(+)) (279 aa).

Shikimate contacts are provided by residues 18–20 (SRS) and Thr-64. The active-site Proton acceptor is the Lys-68. Glu-80 contacts NADP(+). 2 residues coordinate shikimate: Asn-89 and Asp-104. NADP(+) is bound by residues 129–133 (GAGGA), 153–158 (NRTVSR), and Ile-218. Position 220 (Tyr-220) interacts with shikimate. Gly-241 contributes to the NADP(+) binding site.

This sequence belongs to the shikimate dehydrogenase family. Homodimer.

It carries out the reaction shikimate + NADP(+) = 3-dehydroshikimate + NADPH + H(+). It participates in metabolic intermediate biosynthesis; chorismate biosynthesis; chorismate from D-erythrose 4-phosphate and phosphoenolpyruvate: step 4/7. In terms of biological role, involved in the biosynthesis of the chorismate, which leads to the biosynthesis of aromatic amino acids. Catalyzes the reversible NADPH linked reduction of 3-dehydroshikimate (DHSA) to yield shikimate (SA). The polypeptide is Shikimate dehydrogenase (NADP(+)) (Chelativorans sp. (strain BNC1)).